The chain runs to 542 residues: Chaperonin GroEL (542 aa).

ATP-binding positions include threonine 29–proline 32, aspartate 86–threonine 90, glycine 413, and aspartate 493.

This sequence belongs to the chaperonin (HSP60) family. Forms a cylinder of 14 subunits composed of two heptameric rings stacked back-to-back. Interacts with the co-chaperonin GroES.

It is found in the cytoplasm. The catalysed reaction is ATP + H2O + a folded polypeptide = ADP + phosphate + an unfolded polypeptide.. Functionally, together with its co-chaperonin GroES, plays an essential role in assisting protein folding. The GroEL-GroES system forms a nano-cage that allows encapsulation of the non-native substrate proteins and provides a physical environment optimized to promote and accelerate protein folding. The chain is Chaperonin GroEL from Elusimicrobium minutum (strain Pei191).